A 534-amino-acid chain; its full sequence is Bifunctional purine biosynthesis protein PurH (534 aa).

The MGS-like domain occupies 6–151 (TRLPIRRALI…KNHKDVAIVV (146 aa)).

The protein belongs to the PurH family.

It catalyses the reaction (6R)-10-formyltetrahydrofolate + 5-amino-1-(5-phospho-beta-D-ribosyl)imidazole-4-carboxamide = 5-formamido-1-(5-phospho-D-ribosyl)imidazole-4-carboxamide + (6S)-5,6,7,8-tetrahydrofolate. The catalysed reaction is IMP + H2O = 5-formamido-1-(5-phospho-D-ribosyl)imidazole-4-carboxamide. The protein operates within purine metabolism; IMP biosynthesis via de novo pathway; 5-formamido-1-(5-phospho-D-ribosyl)imidazole-4-carboxamide from 5-amino-1-(5-phospho-D-ribosyl)imidazole-4-carboxamide (10-formyl THF route): step 1/1. It participates in purine metabolism; IMP biosynthesis via de novo pathway; IMP from 5-formamido-1-(5-phospho-D-ribosyl)imidazole-4-carboxamide: step 1/1. The polypeptide is Bifunctional purine biosynthesis protein PurH (Pseudomonas syringae pv. tomato (strain ATCC BAA-871 / DC3000)).